The following is a 306-amino-acid chain: Acetaldehyde dehydrogenase 2/3 (306 aa).

The active-site Acyl-thioester intermediate is the C130. NAD(+) is bound by residues 161 to 169 (SAGPGTRKN) and N272.

This sequence belongs to the acetaldehyde dehydrogenase family.

It catalyses the reaction acetaldehyde + NAD(+) + CoA = acetyl-CoA + NADH + H(+). This is Acetaldehyde dehydrogenase 2/3 (mhpF) from Azoarcus sp. (strain BH72).